The primary structure comprises 610 residues: ATP-dependent zinc metalloprotease FtsH (610 aa).

Residues 1 to 5 (MNRSN) are Cytoplasmic-facing. A helical transmembrane segment spans residues 6–26 (IWNLLFTILIIVTLFWLARFF). Over 27-107 (YVENSPVSKL…SGERSGSSSF (81 aa)) the chain is Periplasmic. The chain crosses the membrane as a helical span at residues 108–128 (WINVLGTLIPTILFIVVWLFI). Over 129-610 (MRSLSGRNNQ…LSEEFEKVVE (482 aa)) the chain is Cytoplasmic. Residues Gly164, 204–208 (GTGKT), Leu209, His343, and Glu371 each bind ATP. Residue His423 coordinates Zn(2+). The active site involves Glu424. Residues His427 and Asp500 each coordinate Zn(2+).

This sequence in the central section; belongs to the AAA ATPase family. The protein in the C-terminal section; belongs to the peptidase M41 family. As to quaternary structure, the isolated ADP-bound cytosolic domain forms a 6-fold symmetric protease disk and a 2-fold symmetric AAA ATPase ring. In the absence of nucleotide the AAA ATPase ring also forms symmetric hexamers. It depends on Zn(2+) as a cofactor.

It is found in the cell inner membrane. Its function is as follows. Acts as a processive, ATP-dependent zinc metallopeptidase for both cytoplasmic and membrane proteins. Plays a role in the quality control of integral membrane proteins. The protein is ATP-dependent zinc metalloprotease FtsH of Thermotoga maritima (strain ATCC 43589 / DSM 3109 / JCM 10099 / NBRC 100826 / MSB8).